Consider the following 297-residue polypeptide: CASP-like protein 4A2 (297 aa).

Positions 1–20 (MKMKRTASSNSEAQSYNESP) are enriched in polar residues. Positions 1 to 135 (MKMKRTASSN…PINGEESTRT (135 aa)) are disordered. Residues 1 to 149 (MKMKRTASSN…ARGDDLVSLT (149 aa)) lie on the Cytoplasmic side of the membrane. Over residues 69-83 (LPSPIPPPPPQFPPP) the composition is skewed to pro residues. The helical transmembrane segment at 150–170 (ALGFRITEVILCVISFSIMAA) threads the bilayer. The Extracellular segment spans residues 171–191 (DKTQGWSGDSYDRYKEYRYCL). The helical transmembrane segment at 192-212 (AVNVIAFVYSAFEACDAACYI) threads the bilayer. Residues 213–225 (AKESYMINCGFHD) lie on the Cytoplasmic side of the membrane. Residues 226–246 (LFVFSMDQLLAYLLMSASSCA) form a helical membrane-spanning segment. The Extracellular portion of the chain corresponds to 247 to 265 (ATRVDDWVSNWGKDEFTQM). The helical transmembrane segment at 266-286 (ATASIAVSFLAFGAFAVSALI) threads the bilayer. At 287 to 297 (SSYRLFTHASS) the chain is on the cytoplasmic side.

It belongs to the Casparian strip membrane proteins (CASP) family. As to quaternary structure, homodimer and heterodimers.

The protein resides in the cell membrane. This Arabidopsis thaliana (Mouse-ear cress) protein is CASP-like protein 4A2.